Consider the following 2415-residue polypeptide: Spectrin alpha chain, erythrocytic 1 (2415 aa).

Spectrin repeat units lie at residues 52–152, 157–259, 263–365, 370–471, 475–576, 580–681, 686–787, 792–894, and 898–967; these read YHYQ…SDVL, KFYQ…ESLS, DLQR…AKLK, YHRF…HQYR, DFHL…RKLL, QLLQ…GTQL, QLLQ…KKKL, KLQQ…NDLK, and QLQQ…QQQQ. A Phosphoserine modification is found at Ser257. The SH3 domain maps to 975–1034; it reads GREARVIALYDFEARSRREVSMKKNDVLTLLSSINKDWWKVEADDHQGFVPAVYVRKLAP. Ser990 carries the phosphoserine modification. Spectrin repeat units follow at residues 1085–1177, 1183–1285, 1287–1390, 1394–1489, 1499–1603, 1606–1709, 1712–1815, 1818–1921, 1924–2029, 2040–2142, and 2154–2254; these read LAYE…YQLL, VEMF…SLNE, HKFF…KMLD, ELQL…QLLT, DLKQ…KLNE, RQQR…KLKE, ALFQ…NLEE, EYLQ…SQLD, HAFQ…KLLE, LFME…QELQ, and MCQE…NLEQ. At Ser1972 the chain carries Phosphoserine. EF-hand domains lie at 2267 to 2302, 2310 to 2345, and 2347 to 2382; these read ETLK…LNYY, EPEP…KESE, and IKTS…EQVS. The Ca(2+) site is built by Asp2280, Asn2282, Thr2284, Arg2286, Glu2291, Asp2323, Tyr2329, and Asp2334.

It belongs to the spectrin family. Composed of non-homologous chains, alpha and beta, which aggregate to form dimers, tetramers, and higher polymers. Interacts with FASLG. Interacts with BCAM.

The protein localises to the cytoplasm. Its subcellular location is the cytoskeleton. It is found in the cell cortex. Its function is as follows. Spectrin is the major constituent of the cytoskeletal network underlying the erythrocyte plasma membrane. It associates with band 4.1 and actin to form the cytoskeletal superstructure of the erythrocyte plasma membrane. This chain is Spectrin alpha chain, erythrocytic 1 (Spta1), found in Mus musculus (Mouse).